A 1101-amino-acid chain; its full sequence is Type VI secretion system component TssM1 (1101 aa).

The chain crosses the membrane as a helical span at residues 371–391 (LTIGALSATALVVLAVTAVWI).

It localises to the cell inner membrane. Core component of the type VI (T6SS) secretion system that plays a role in the release of toxins targeting both eukaryotic and prokaryotic species. Plays an essential role in stabilization of assembled TssK1 structure at a fixed perimembrane site. This chain is Type VI secretion system component TssM1, found in Pseudomonas aeruginosa (strain ATCC 15692 / DSM 22644 / CIP 104116 / JCM 14847 / LMG 12228 / 1C / PRS 101 / PAO1).